The sequence spans 161 residues: Epithelial membrane protein 2 (161 aa).

A run of 4 helical transmembrane segments spans residues 1–21 (MLVI…LLFI), 67–87 (TMIL…LQLF), 95–115 (FVFT…GASI), and 137–157 (FVVA…YLVL).

Belongs to the PMP-22/EMP/MP20 family. Expressed in the arches, orbits, pectoral fins, vessels, pronephric renal tubules, and glomeruli.

It is found in the golgi apparatus membrane. The protein resides in the cell membrane. Its subcellular location is the apical cell membrane. The protein localises to the membrane raft. It localises to the cytoplasm. It is found in the nucleus. The protein resides in the perinuclear region. Its function is as follows. Functions as a key regulator of cell membrane composition by regulating protein surface expression. Also, plays a role in regulation of processes including cell migration, cell proliferation, cell contraction and cell adhesion. May play a role in glomerular filtration. The protein is Epithelial membrane protein 2 (emp2) of Danio rerio (Zebrafish).